We begin with the raw amino-acid sequence, 345 residues long: Methylthioribose-1-phosphate isomerase (345 aa).

Substrate is bound by residues 44–46, R86, and Q194; that span reads RGA. D235 functions as the Proton donor in the catalytic mechanism. 245–246 contacts substrate; it reads NK.

The protein belongs to the eIF-2B alpha/beta/delta subunits family. MtnA subfamily.

The catalysed reaction is 5-(methylsulfanyl)-alpha-D-ribose 1-phosphate = 5-(methylsulfanyl)-D-ribulose 1-phosphate. It participates in amino-acid biosynthesis; L-methionine biosynthesis via salvage pathway; L-methionine from S-methyl-5-thio-alpha-D-ribose 1-phosphate: step 1/6. Its function is as follows. Catalyzes the interconversion of methylthioribose-1-phosphate (MTR-1-P) into methylthioribulose-1-phosphate (MTRu-1-P). In Desulfitobacterium hafniense (strain DSM 10664 / DCB-2), this protein is Methylthioribose-1-phosphate isomerase.